We begin with the raw amino-acid sequence, 1107 residues long: Protein translocase subunit SecA (1107 aa).

Residues Gln169, 187 to 191 (GEGKT), and Asp688 contribute to the ATP site. Positions 1036–1066 (RHAAEQRTDMSKYRTQKDDIEAQQKAQRDAA) are enriched in basic and acidic residues. Residues 1036–1107 (RHAAEQRTDM…KFKQCHGRNL (72 aa)) form a disordered region. Zn(2+) contacts are provided by Cys1091, Cys1093, Cys1102, and His1103. A compositionally biased stretch (basic residues) spans 1097-1107 (KKFKQCHGRNL).

It belongs to the SecA family. In terms of assembly, monomer and homodimer. Part of the essential Sec protein translocation apparatus which comprises SecA, SecYEG and auxiliary proteins SecDF. Other proteins may also be involved. Zn(2+) serves as cofactor.

The protein localises to the cell inner membrane. The protein resides in the cytoplasm. The enzyme catalyses ATP + H2O + cellular proteinSide 1 = ADP + phosphate + cellular proteinSide 2.. Functionally, part of the Sec protein translocase complex. Interacts with the SecYEG preprotein conducting channel. Has a central role in coupling the hydrolysis of ATP to the transfer of proteins into and across the cell membrane, serving as an ATP-driven molecular motor driving the stepwise translocation of polypeptide chains across the membrane. The protein is Protein translocase subunit SecA of Porphyromonas gingivalis (strain ATCC BAA-308 / W83).